A 169-amino-acid polypeptide reads, in one-letter code: 2-C-methyl-D-erythritol 2,4-cyclodiphosphate synthase (169 aa).

Asp13 and His15 together coordinate a divalent metal cation. Residues 13 to 15 (DVH) and 39 to 40 (HS) each bind 4-CDP-2-C-methyl-D-erythritol 2-phosphate. A divalent metal cation is bound at residue His47. 4-CDP-2-C-methyl-D-erythritol 2-phosphate-binding positions include 61-63 (DIG), 66-70 (FPDTD), Phe144, and Arg147.

This sequence belongs to the IspF family. In terms of assembly, homotrimer. A divalent metal cation serves as cofactor.

The catalysed reaction is 4-CDP-2-C-methyl-D-erythritol 2-phosphate = 2-C-methyl-D-erythritol 2,4-cyclic diphosphate + CMP. It participates in isoprenoid biosynthesis; isopentenyl diphosphate biosynthesis via DXP pathway; isopentenyl diphosphate from 1-deoxy-D-xylulose 5-phosphate: step 4/6. Involved in the biosynthesis of isopentenyl diphosphate (IPP) and dimethylallyl diphosphate (DMAPP), two major building blocks of isoprenoid compounds. Catalyzes the conversion of 4-diphosphocytidyl-2-C-methyl-D-erythritol 2-phosphate (CDP-ME2P) to 2-C-methyl-D-erythritol 2,4-cyclodiphosphate (ME-CPP) with a corresponding release of cytidine 5-monophosphate (CMP). This is 2-C-methyl-D-erythritol 2,4-cyclodiphosphate synthase from Cupriavidus pinatubonensis (strain JMP 134 / LMG 1197) (Cupriavidus necator (strain JMP 134)).